We begin with the raw amino-acid sequence, 442 residues long: Ribosomal protein uS12 methylthiotransferase RimO (442 aa).

Positions 5–117 constitute an MTTase N-terminal domain; sequence PSIGVVSLGC…VLDAIHAALP (113 aa). [4Fe-4S] cluster-binding residues include cysteine 14, cysteine 50, cysteine 79, cysteine 148, cysteine 152, and cysteine 155. The Radical SAM core domain maps to 134–371; it reads LTPPHYAYLK…MAVQEAISRQ (238 aa). A TRAM domain is found at 374-441; that stretch reads QRRVGQRQRV…AHDLYGMVVS (68 aa).

Belongs to the methylthiotransferase family. RimO subfamily. [4Fe-4S] cluster serves as cofactor.

The protein localises to the cytoplasm. It carries out the reaction L-aspartate(89)-[ribosomal protein uS12]-hydrogen + (sulfur carrier)-SH + AH2 + 2 S-adenosyl-L-methionine = 3-methylsulfanyl-L-aspartate(89)-[ribosomal protein uS12]-hydrogen + (sulfur carrier)-H + 5'-deoxyadenosine + L-methionine + A + S-adenosyl-L-homocysteine + 2 H(+). In terms of biological role, catalyzes the methylthiolation of an aspartic acid residue of ribosomal protein uS12. This is Ribosomal protein uS12 methylthiotransferase RimO from Acidithiobacillus ferrooxidans (strain ATCC 53993 / BNL-5-31) (Leptospirillum ferrooxidans (ATCC 53993)).